The chain runs to 451 residues: MKAWNLDVQNATARVQLPEGLVVQDYYMSQGYYDLETGTWEIGDIPAYEERSLTFICLLNRTGSVTVNANVTADGDDNSANNNAELTFKVFGISDLEVNVTGNKETARIGDTVRITVKLKNRGPHDANNIKIGNFLSGGLVVQNFSYDAGYFDDITREWIFETLAAGEEATLTLDCLVNRTGELSDYVSVREVDEGDVNVYNNMAHASVAVKGTDLDLDLSVSKLRAYQGDVVNVVCRVRNNGPETAQNARVNLQLPGNLQVQHVQLDRGTYSNGVWVIGDLADNETALLNITARVMSAGNFTLNATAVSPAIDDSNPVNNDDTARISVAIPKKTLKVRIKNNSAVTIRVLLYVTVNDHGKITRKTYNFYLKKGLSRDLSLGYFQLGTTALFKQYTYNTNYRSRTVSYENTYNATSVITQRVNVSGVKGRQKAPVVRIATLLLDENGTSLQ.

The protein to ORF5 in pFZ1.

This is an uncharacterized protein from Methanothermobacter thermautotrophicus (Methanobacterium thermoformicicum).